The chain runs to 308 residues: Elongation factor Ts (308 aa).

Residues 80 to 83 (TDFV) form an involved in Mg(2+) ion dislocation from EF-Tu region.

Belongs to the EF-Ts family.

The protein resides in the cytoplasm. Associates with the EF-Tu.GDP complex and induces the exchange of GDP to GTP. It remains bound to the aminoacyl-tRNA.EF-Tu.GTP complex up to the GTP hydrolysis stage on the ribosome. This chain is Elongation factor Ts, found in Rhizobium johnstonii (strain DSM 114642 / LMG 32736 / 3841) (Rhizobium leguminosarum bv. viciae).